The chain runs to 447 residues: Sulfoquinovose isomerase (447 aa).

The protein belongs to the SqvD family.

It carries out the reaction 6-sulfo-beta-D-quinovose = 6-deoxy-6-sulfo-D-fructose. Its function is as follows. Part of the sulfo-TK pathway, a D-sulfoquinovose degradation pathway that produces 2-hydroxyethane-1-sulfonate (isethionate). Catalyzes the isomerization of sulfoquinovose (SQ) to 6-deoxy-6-sulfo-D-fructose (SF). The sequence is that of Sulfoquinovose isomerase from Clostridium sp. (strain MSTE9).